We begin with the raw amino-acid sequence, 163 residues long: Small ribosomal subunit protein uS5 (163 aa).

Positions 8 to 71 constitute an S5 DRBM domain; that stretch reads LIEKIVYLNR…EKARKEMISV (64 aa).

Belongs to the universal ribosomal protein uS5 family. Part of the 30S ribosomal subunit. Contacts proteins S4 and S8.

With S4 and S12 plays an important role in translational accuracy. In terms of biological role, located at the back of the 30S subunit body where it stabilizes the conformation of the head with respect to the body. The chain is Small ribosomal subunit protein uS5 from Maridesulfovibrio salexigens (strain ATCC 14822 / DSM 2638 / NCIMB 8403 / VKM B-1763) (Desulfovibrio salexigens).